A 550-amino-acid chain; its full sequence is MAAKEVKFGDSARARMVEGINILADAVKVTLGPKGRNVVLERSFGGPTVTKDGVSVAKEIELKDKFANMGAQMVKEVASKTSDIAGDGTTTATVLAQSIVREGMKFVAAGMNPMDLKRGIDKAVVATIAELQAFSKPCTTTKEIAQVGSISANSDSDIGEIIANAMEKVGKEGVITVEDGKSLANELDVVEGMQFDRGYLSPYFINNGDKQQALLENPFVLLFDKKISNIRDLLPILEQVAKAGRPLLIIAEDVDGEALATLVVNNIRGILKTVAVKAPGFGDRRKAMLEDIAILTGGTVIAEETGLTLEKAVLKDLGQAKRIEVAKENTTIIDGAGEAAAIEARVKQIRIQIEEATSDYDKEKLQERVAKLAGGVAVIKVGAATEVEMKEKKARVEDALHATRAAVEEGIVAGGGVALIRARAAVGKLKGDNHDQDAGIKIVLRAMEQPLREIVANAGDEPSVVVDKVQRGKGNYGYNASTGEYGDMVEMGVLDPTKVTRTALQNAASVAGLMLTTECMVAELAEDKPAGGMPDMGGMGGMGGMGGMGM.

ATP-binding positions include 30-33 (TLGP), Lys51, 87-91 (DGTTT), Gly415, and Asp495.

The protein belongs to the chaperonin (HSP60) family. Forms a cylinder of 14 subunits composed of two heptameric rings stacked back-to-back. Interacts with the co-chaperonin GroES.

It localises to the cytoplasm. The catalysed reaction is ATP + H2O + a folded polypeptide = ADP + phosphate + an unfolded polypeptide.. Together with its co-chaperonin GroES, plays an essential role in assisting protein folding. The GroEL-GroES system forms a nano-cage that allows encapsulation of the non-native substrate proteins and provides a physical environment optimized to promote and accelerate protein folding. In Dechloromonas aromatica (strain RCB), this protein is Chaperonin GroEL.